The following is a 736-amino-acid chain: Myotubularin-related protein 12 (736 aa).

A Myotubularin phosphatase domain is found at 182–558 (YLRSTNPEML…RQLSLPSSAF (377 aa)). A disordered region spans residues 672–691 (SLATQPDHPPPLHHRLPSFG).

The protein belongs to the protein-tyrosine phosphatase family. Non-receptor class myotubularin subfamily. In terms of assembly, heterodimer with lipid phosphatase mtm1. In skeletal muscles, the interaction stabilizes both mtmr12 and mtm1 protein levels.

The protein resides in the cytoplasm. It localises to the sarcoplasmic reticulum. It is found in the myofibril. Its subcellular location is the sarcomere. Its function is as follows. Acts as an adapter for the myotubularin phosphatase mtm1 to regulate mtm1 protein stability and possibly its intracellular location. By stabilizing mtm1 protein levels, required for skeletal muscle maintenance but not for myogenesis. In skeletal muscle cells, does not regulate mtm1 subcellular localization. This chain is Myotubularin-related protein 12 (mtmr12), found in Danio rerio (Zebrafish).